A 421-amino-acid chain; its full sequence is Trimethyllysine dioxygenase, mitochondrial (421 aa).

Residues 1–15 (MWCHRLSHLQSRLQD) constitute a mitochondrion transit peptide. N6-acetyllysine is present on K236. The Fe cation site is built by H242, D244, and H389.

Belongs to the gamma-BBH/TMLD family. Homodimer. The cofactor is Fe(2+). L-ascorbate is required as a cofactor.

It is found in the mitochondrion matrix. The enzyme catalyses N(6),N(6),N(6)-trimethyl-L-lysine + 2-oxoglutarate + O2 = (3S)-3-hydroxy-N(6),N(6),N(6)-trimethyl-L-lysine + succinate + CO2. The protein operates within amine and polyamine biosynthesis; carnitine biosynthesis. In terms of biological role, converts trimethyllysine (TML) into hydroxytrimethyllysine (HTML). This Bos taurus (Bovine) protein is Trimethyllysine dioxygenase, mitochondrial (TMLHE).